A 472-amino-acid chain; its full sequence is ATP synthase subunit beta (472 aa).

G155–T162 provides a ligand contact to ATP.

Belongs to the ATPase alpha/beta chains family. As to quaternary structure, F-type ATPases have 2 components, CF(1) - the catalytic core - and CF(0) - the membrane proton channel. CF(1) has five subunits: alpha(3), beta(3), gamma(1), delta(1), epsilon(1). CF(0) has three main subunits: a(1), b(2) and c(9-12). The alpha and beta chains form an alternating ring which encloses part of the gamma chain. CF(1) is attached to CF(0) by a central stalk formed by the gamma and epsilon chains, while a peripheral stalk is formed by the delta and b chains.

It is found in the cell membrane. The enzyme catalyses ATP + H2O + 4 H(+)(in) = ADP + phosphate + 5 H(+)(out). Functionally, produces ATP from ADP in the presence of a proton gradient across the membrane. The catalytic sites are hosted primarily by the beta subunits. In Fervidobacterium islandicum, this protein is ATP synthase subunit beta.